Reading from the N-terminus, the 121-residue chain is MSTYAIIDLGGKQLRVEPGRFYDAHLFSSFKSLLSESNTKIIIFRVLMISHGTEVQFGYPWLKNASVKARILHKKQNDKMLIYKMRSKKKTRKKFGHRQKIARFIVDAIQYNGQTFTTNLK.

Belongs to the bacterial ribosomal protein bL21 family. Part of the 50S ribosomal subunit.

Its subcellular location is the plastid. The protein resides in the chloroplast. In terms of biological role, this protein binds to 23S rRNA. The sequence is that of Large ribosomal subunit protein bL21c from Chaetosphaeridium globosum (Charophycean green alga).